Consider the following 248-residue polypeptide: Cell division protein ZapD (248 aa).

Belongs to the ZapD family. Interacts with FtsZ.

The protein localises to the cytoplasm. In terms of biological role, cell division factor that enhances FtsZ-ring assembly. Directly interacts with FtsZ and promotes bundling of FtsZ protofilaments, with a reduction in FtsZ GTPase activity. The polypeptide is Cell division protein ZapD (Aliivibrio salmonicida (strain LFI1238) (Vibrio salmonicida (strain LFI1238))).